The sequence spans 299 residues: Protoheme IX farnesyltransferase 1 (299 aa).

The next 9 helical transmembrane spans lie at 24 to 44, 46 to 66, 97 to 117, 118 to 138, 146 to 166, 170 to 190, 217 to 237, 239 to 259, and 278 to 298; these read VVAL…PGVP, AAVV…AAMV, LLVA…CCNA, LTAW…TLLL, IVIG…AVNG, AFAL…FWAL, LSIV…VALG, AGAI…FLAV, and IWYL…LIPL.

The protein belongs to the UbiA prenyltransferase family. Protoheme IX farnesyltransferase subfamily.

It localises to the cell inner membrane. The catalysed reaction is heme b + (2E,6E)-farnesyl diphosphate + H2O = Fe(II)-heme o + diphosphate. The protein operates within porphyrin-containing compound metabolism; heme O biosynthesis; heme O from protoheme: step 1/1. Functionally, converts heme B (protoheme IX) to heme O by substitution of the vinyl group on carbon 2 of heme B porphyrin ring with a hydroxyethyl farnesyl side group. The sequence is that of Protoheme IX farnesyltransferase 1 from Chromobacterium violaceum (strain ATCC 12472 / DSM 30191 / JCM 1249 / CCUG 213 / NBRC 12614 / NCIMB 9131 / NCTC 9757 / MK).